The sequence spans 304 residues: Oxygen-dependent coproporphyrinogen-III oxidase (304 aa).

Residue serine 93 participates in substrate binding. A divalent metal cation contacts are provided by histidine 97 and histidine 107. The active-site Proton donor is the histidine 107. 109 to 111 (NVR) contributes to the substrate binding site. Positions 146 and 176 each coordinate a divalent metal cation. Positions 241-276 (YVEFNLVYDRGTLFGLQSGGRTESILMSLPPQVRWG) are important for dimerization. 259–261 (GGR) lines the substrate pocket.

Belongs to the aerobic coproporphyrinogen-III oxidase family. As to quaternary structure, homodimer. A divalent metal cation is required as a cofactor.

It is found in the cytoplasm. The enzyme catalyses coproporphyrinogen III + O2 + 2 H(+) = protoporphyrinogen IX + 2 CO2 + 2 H2O. Its pathway is porphyrin-containing compound metabolism; protoporphyrin-IX biosynthesis; protoporphyrinogen-IX from coproporphyrinogen-III (O2 route): step 1/1. Involved in the heme biosynthesis. Catalyzes the aerobic oxidative decarboxylation of propionate groups of rings A and B of coproporphyrinogen-III to yield the vinyl groups in protoporphyrinogen-IX. This is Oxygen-dependent coproporphyrinogen-III oxidase from Pseudomonas syringae pv. syringae (strain B728a).